We begin with the raw amino-acid sequence, 102 residues long: Co-chaperonin GroES (102 aa).

The protein belongs to the GroES chaperonin family. Heptamer of 7 subunits arranged in a ring. Interacts with the chaperonin GroEL.

It localises to the cytoplasm. In terms of biological role, together with the chaperonin GroEL, plays an essential role in assisting protein folding. The GroEL-GroES system forms a nano-cage that allows encapsulation of the non-native substrate proteins and provides a physical environment optimized to promote and accelerate protein folding. GroES binds to the apical surface of the GroEL ring, thereby capping the opening of the GroEL channel. The polypeptide is Co-chaperonin GroES (Streptomyces albus G).